The chain runs to 144 residues: Protein cornichon (144 aa).

Over 1 to 10 (MAFNFTAFTY) the chain is Lumenal. The interval 1–57 (MAFNFTAFTYIVALIGDAFLIFFAIFHVIAFDELKTDYKNPIDQCNSLNPLVLPEYL) is interaction with grk. A helical membrane pass occupies residues 11-31 (IVALIGDAFLIFFAIFHVIAF). Residues 32 to 56 (DELKTDYKNPIDQCNSLNPLVLPEY) lie on the Cytoplasmic side of the membrane. Residues 57 to 77 (LLHLFLNLLFLFCGEWYSLCL) traverse the membrane as a helical segment. Over 78 to 122 (NIPLIAYHIWRYKNRPLMSGPGLYDPTTVLKTDTLSRNLREGWIK) the chain is Lumenal. Residues 123 to 143 (LAVYLISFFYYIYGMVYSLIS) form a helical membrane-spanning segment. A topological domain (cytoplasmic) is located at residue threonine 144.

Belongs to the cornichon family. As to quaternary structure, interacts with grk.

It is found in the endoplasmic reticulum membrane. Acts as a cargo receptor necessary for the transportation of gurken (grk) to a transitional endoplasmic reticulum (tER) site and promotes its incorporation into coat protein complex II (COPII) vesicles. Associated with gurken, produces a signal received by torpedo resulting in a signaling pathway that first establishes posterior follicle cell fates and normal localization of the anterior and posterior determinants, later they act in a signaling event inducing dorsal follicle cell fates and regulating the dorsal-ventral pattern of egg and embryo. In Drosophila virilis (Fruit fly), this protein is Protein cornichon (cni).